A 504-amino-acid chain; its full sequence is Dolichol kinase sec59 (504 aa).

Residues 1–55 (MYIMSKKCYDTSEKIDREQECVEVNYQHRNFESILEIFSVLFIPFLCNSGKKFLQ) are Cytoplasmic-facing. The helical transmembrane segment at 56 to 76 (ISNASFFLPACFYLLGSSSII) threads the bilayer. Position 77 (glutamine 77) is a topological domain, lumenal. Residues 78 to 98 (LYEPLLWLSSFPFCILYVGFG) traverse the membrane as a helical segment. Over 99 to 157 (ENSVLYHEMYTVCLYNALLSLTQRWKWLSIVLDGLGNSSVNLKLHETVILAFLEITQNS) the chain is Cytoplasmic. The helical transmembrane segment at 158–178 (FTFIEGILICTGLTGLCFATF) threads the bilayer. Over 179-187 (SYEVSPVVS) the chain is Lumenal. A helical membrane pass occupies residues 188 to 208 (VLSGVLLISLPTLILLNLCIL). At 209–215 (KLAAKLH) the chain is on the cytoplasmic side. Residues 216-236 (LSALFTTCLIYFFSALLVFLV) traverse the membrane as a helical segment. Over 237–263 (SRSWVAGQLGQAPEVWLFNQIFSHRNS) the chain is Lumenal. The chain crosses the membrane as a helical span at residues 264–284 (LTRIKIIIWWIICLGCFIFIL). The Cytoplasmic portion of the chain corresponds to 285–325 (LRSNRNNPLGKYFTTEDEVLNFRRKTYHALVVFLFLPVCCL). Residues 326–347 (DPHFLHLSFSGVLFIFLFVEGI) form a helical membrane-spanning segment. Topologically, residues 348-373 (RILRLKPFGKMIHEFLWEYTDNRDHK) are lumenal. A helical transmembrane segment spans residues 374–394 (GPLIISHIYLLIGCAIPIWLS). The Cytoplasmic portion of the chain corresponds to 395–403 (NALKGPVAS). A helical membrane pass occupies residues 404 to 424 (VELLVGVLCLGCGDSMASIIG). Residues 425 to 440 (KRFGKHRISKTNKSIE) are Lumenal-facing. Residues 441 to 461 (GVFAFSISVFLVLHLTQAFHV) traverse the membrane as a helical segment. A topological domain (cytoplasmic) is located at residue cysteine 462. A helical transmembrane segment spans residues 463-483 (PSVTFWKTLFMSLCTAILEGV). At 484–504 (STENDNLILPMYMWVLYQALD) the chain is on the lumenal side.

It belongs to the polyprenol kinase family.

The protein resides in the endoplasmic reticulum membrane. The enzyme catalyses a di-trans,poly-cis-dolichol + CTP = a di-trans,poly-cis-dolichyl phosphate + CDP + H(+). Its pathway is protein modification; protein glycosylation. In terms of biological role, catalyzes CTP-mediated phosphorylation of dolichol, the terminal step in de novo dolichyl monophosphate (Dol-P) biosynthesis. Dol-P is a lipid carrier essential for the synthesis of N-linked and O-linked oligosaccharides and for GPI anchors. The sequence is that of Dolichol kinase sec59 from Schizosaccharomyces pombe (strain 972 / ATCC 24843) (Fission yeast).